Consider the following 79-residue polypeptide: Acyl carrier protein (79 aa).

In terms of domain architecture, Carrier spans 2 to 77 (SEIGERVKKI…DATKFLEKNA (76 aa)). At Ser37 the chain carries O-(pantetheine 4'-phosphoryl)serine.

Belongs to the acyl carrier protein (ACP) family. Post-translationally, 4'-phosphopantetheine is transferred from CoA to a specific serine of apo-ACP by AcpS. This modification is essential for activity because fatty acids are bound in thioester linkage to the sulfhydryl of the prosthetic group.

Its subcellular location is the cytoplasm. Its pathway is lipid metabolism; fatty acid biosynthesis. In terms of biological role, carrier of the growing fatty acid chain in fatty acid biosynthesis. The polypeptide is Acyl carrier protein (Nitrobacter hamburgensis (strain DSM 10229 / NCIMB 13809 / X14)).